Here is a 100-residue protein sequence, read N- to C-terminus: Urease subunit gamma (100 aa).

It belongs to the urease gamma subunit family. As to quaternary structure, heterotrimer of UreA (gamma), UreB (beta) and UreC (alpha) subunits. Three heterotrimers associate to form the active enzyme.

Its subcellular location is the cytoplasm. The enzyme catalyses urea + 2 H2O + H(+) = hydrogencarbonate + 2 NH4(+). The protein operates within nitrogen metabolism; urea degradation; CO(2) and NH(3) from urea (urease route): step 1/1. Functionally, expression of the urease operon increases the likelihood of bacterial survival by contributing to acid resistance in vitro and in vivo in BALB/c mice. Y.enterocolitica enters the body via an oral path and must survive the acidic stomach before being able to colonize the intestinal mucosa. The chain is Urease subunit gamma from Yersinia enterocolitica.